A 529-amino-acid polypeptide reads, in one-letter code: PTS system alpha-glucoside-specific EIICB component (529 aa).

The PTS EIIC type-1 domain occupies 1-416 (MMKKVQRFGG…MDLKTPGRED (416 aa)). The next 12 membrane-spanning stretches (helical) occupy residues 8–28 (FGGAMMAPVLLFAFTGIVVGL), 59–79 (GWTVFRQMPILFAIGLPISLA), 91–111 (FALYTTFNYFVAAILKVFYGI), 130–150 (VPTLDTNLFGGILIAALVVYL), 170–190 (VFVYIVGFVVMIPCAFLTVLI), 198–218 (ISALQGFMKASGIFGVWIYTF), 222–242 (ILIPTGLHHFVYTPFVFGPAA), 272–292 (GGFALHGNSKIFGAPGIALAM), 304–324 (VAALLIPIIFTAVISGITEPL), 328–348 (FLFIAPVLFAVHACLAATMAA), 352–372 (AFGVVGNMGGGLLDFFFLNWI), and 380–400 (GTVIAQIVIGLIFTAIYFVVF). Residues 450 to 529 (AQKGAIILEA…ERIEEMMKKG (80 aa)) form the PTS EIIB type-1 domain. The active-site Phosphocysteine intermediate; for EIIB activity is C472.

The protein resides in the cell membrane. Functionally, the phosphoenolpyruvate-dependent sugar phosphotransferase system (sugar PTS), a major carbohydrate active -transport system, catalyzes the phosphorylation of incoming sugar substrates concomitantly with their translocation across the cell membrane. This system is probably involved in transport of the alpha-glucosides trehalulose, turanose, maltulose and palatinose. The chain is PTS system alpha-glucoside-specific EIICB component from Leptotrichia buccalis (strain ATCC 14201 / DSM 1135 / JCM 12969 / NCTC 10249 / C-1013-b).